Here is a 246-residue protein sequence, read N- to C-terminus: Probable transcriptional regulatory protein GWCH70_2524 (246 aa).

Belongs to the TACO1 family.

The protein resides in the cytoplasm. The protein is Probable transcriptional regulatory protein GWCH70_2524 of Geobacillus sp. (strain WCH70).